We begin with the raw amino-acid sequence, 388 residues long: CUE domain-containing protein 1 (388 aa).

The segment covering 1–10 has biased composition (low complexity); the sequence is MTSLFRRSSS. Residues 1–45 form a disordered region; it reads MTSLFRRSSSGSGGGGATGARGAGTGAGDGSTAPQELNNSRPARQ. Over residues 11-29 the composition is skewed to gly residues; that stretch reads GSGGGGATGARGAGTGAGD. The CUE domain occupies 50–93; sequence EFNQAMDDFKTMFPNMDYDIIECVLRANSGAVDATIDQLLQMNL. Disordered regions lie at residues 152–178, 196–225, 270–302, and 369–388; these read PTPPPRIDVPGSGQPASQRRYRNWNPP, DSIQGHPGGSKPMSGEGGPPPAPGPMACDQ, SQKSKSNNAAVGNDGGFPSSVPGTSETNPTVSE, and DFRGRRQEVPKVEEALREGQ. Over residues 290 to 300 the composition is skewed to polar residues; it reads VPGTSETNPTV.

The chain is CUE domain-containing protein 1 (Cuedc1) from Mus musculus (Mouse).